A 131-amino-acid chain; its full sequence is Fatty acid-binding protein (131 aa).

Residues R106 and 126 to 128 contribute to the (5Z,8Z,11Z,14Z)-eicosatetraenoate site; that span reads RFY. Residues R106 and 126-128 contribute to the (9Z)-octadecenoate site; that span reads RFY.

Belongs to the calycin superfamily. Fatty-acid binding protein (FABP) family.

It is found in the cytoplasm. Its function is as follows. FABPs are thought to play a role in the intracellular transport of long-chain fatty acids and their acyl-CoA esters. The sequence is that of Fatty acid-binding protein from Tyrophagus putrescentiae (Mold mite).